Consider the following 199-residue polypeptide: MLYIFDLGNVIVDIDFNRVLGAWSDLTRIPLASLKKSFHMGEAFHQHERGEISDEAFAEALCHEMALPLSYEQFSHGWQAVFVALRPEVIAIMHKLREQGHRVVVLSNTNRLHTTFWPEEYPEIRDAADHIYLSQDLGMRKPEARIYQHVLQAEGFSPSDTVFFDDNADNIEGANQLGITSILVKDKTTIPDYFAKVLC.

D6 functions as the Nucleophile in the catalytic mechanism. D6 contributes to the Mg(2+) binding site. Substrate is bound by residues 6 to 8 (DLG), 107 to 108 (SN), K141, and D166. Residue D166 coordinates Mg(2+).

The protein belongs to the HAD-like hydrolase superfamily. YihX family. It depends on Mg(2+) as a cofactor. The cofactor is Mn(2+). Co(2+) serves as cofactor. Requires Zn(2+) as cofactor.

The catalysed reaction is alpha-D-glucose 1-phosphate + H2O = D-glucose + phosphate. Its function is as follows. Catalyzes the dephosphorylation of alpha-D-glucose 1-phosphate (Glc1P) and, to a lesser extent, of other sugar phosphates. Has no activity with the beta form of Glc1P. In addition, YihX has significant phosphatase activity against pyridoxal phosphate (PLP) and low beta-phosphoglucomutase activity. The protein is Alpha-D-glucose 1-phosphate phosphatase YihX (yihX) of Escherichia coli (strain K12).